The sequence spans 182 residues: Adenine phosphoribosyltransferase (182 aa).

It belongs to the purine/pyrimidine phosphoribosyltransferase family. In terms of assembly, homodimer.

It localises to the cytoplasm. The catalysed reaction is AMP + diphosphate = 5-phospho-alpha-D-ribose 1-diphosphate + adenine. Its pathway is purine metabolism; AMP biosynthesis via salvage pathway; AMP from adenine: step 1/1. Its function is as follows. Catalyzes a salvage reaction resulting in the formation of AMP, that is energically less costly than de novo synthesis. The protein is Adenine phosphoribosyltransferase of Pseudomonas putida (strain GB-1).